Here is a 127-residue protein sequence, read N- to C-terminus: Ycf91-like protein (127 aa).

Belongs to the ycf91 family.

In Nostoc sp. (strain PCC 7120 / SAG 25.82 / UTEX 2576), this protein is Ycf91-like protein.